A 1010-amino-acid polypeptide reads, in one-letter code: Eukaryotic translation initiation factor 4E transporter (1010 aa).

The YXXXXLphi motif signature appears at 10-16 (YSKVDLL). 5 disordered regions span residues 154–182 (GSNS…RKGS), 196–277 (PDHD…RLVE), 289–320 (YDSK…SKRG), 354–391 (NEER…SNDS), and 921–960 (QSNP…ERIS). Positions 201–211 (CMSSSPTFSTS) are enriched in polar residues. The span at 227–247 (DNWDYKNEKTVEASIENEKET) shows a compositional bias: basic and acidic residues. The segment covering 248–263 (SPNGSGSTSSLNQHNQ) has biased composition (polar residues). Basic and acidic residues-rich tracts occupy residues 354–364 (NEERSVTEDKN) and 372–384 (KNLD…DEAS). Positions 934-953 (SDSSDSGNVIKANSLTSPSY) are enriched in polar residues.

Belongs to the 4E-T/EIF4E-T family. As to quaternary structure, interacts (via YXXXXLphi motif) with eIF4E1. Interacts with DDX6/me31B. As to expression, expressed in all larval and adult organs and tissues, with highest levels in the ovary.

It localises to the cytoplasm. The protein localises to the P-body. It is found in the nucleus. In terms of biological role, eIF4E1-binding protein that regulates translation and stability of mRNAs in processing bodies (P-bodies). Probably plays a role in P-bodies to coordinate the storage of translationally inactive mRNAs in the cytoplasm and prevent their degradation. Acts as a binding platform for multiple RNA-binding proteins. Required for the formation of P-bodies. The polypeptide is Eukaryotic translation initiation factor 4E transporter (Drosophila melanogaster (Fruit fly)).